The sequence spans 261 residues: Small ribosomal subunit protein mS23 (261 aa).

The segment at 233–261 (RASSPSASWTNETEEEQKPIDQDVEEIQL) is disordered.

It belongs to the mitochondrion-specific ribosomal protein mS23 family. Component of the mitochondrial small ribosomal subunit.

Its subcellular location is the mitochondrion. In Kluyveromyces lactis (strain ATCC 8585 / CBS 2359 / DSM 70799 / NBRC 1267 / NRRL Y-1140 / WM37) (Yeast), this protein is Small ribosomal subunit protein mS23 (RSM25).